Consider the following 148-residue polypeptide: Augurin (148 aa).

The signal sequence occupies residues 1 to 31; sequence MSTSSARPAVLALAGLALLLLLCLGPDGISG. Propeptides lie at residues 32–70 and 133–148; these read NKLKKMLQKREGPVPSKTNVAVAENTAKEFLGGLKRAKR and SRESFRHGASVNYNDY.

The protein belongs to the augurin family. Expressed in the intermediate lobe of pituitary, glomerular layer of adrenal cortex, choroid plexus and atrioventricular node of the heart. Expressed in the brain with high expression in the choroid plexus and the epithelial lining of the central canal and expression in the gray matter of the spinal cord (at protein level).

Its subcellular location is the secreted. It is found in the cytoplasm. The protein localises to the apical cell membrane. Functionally, probable hormone that may attenuate cell proliferation and induce senescence of oligodendrocyte and neural precursor cells in the central nervous system. ECRG4-induced senescence is characterized by G1 arrest, RB1 dephosphorylation and accelerated CCND1 and CCND3 proteasomal degradation. This chain is Augurin, found in Mus musculus (Mouse).